Reading from the N-terminus, the 282-residue chain is Extent of cell elongation protein 1 (282 aa).

An N-terminal signal peptide occupies residues 1-18 (MKFSKVASFAFLALSSQA). Residues 68 to 92 (ISFAGIVSSIINQLPSIIQIIGNII) traverse the membrane as a helical segment.

The protein localises to the secreted. Its subcellular location is the host cell membrane. In terms of biological role, secreted protein cleaved by KEX2 in 8 similar peptides (ECE1-I to ECE1-VIII). Stimulates biofilm formation. Its function is as follows. Acts as a cytolytic peptide toxin that directly damages host epithelial membranes, triggers a danger response signaling pathway and activates epithelial immunity. Probably acts similarly to cationic antimicrobial peptide toxins, inducing lesions after binding to target cell membranes and causing an inward current associated with calcium influx. In Candida tropicalis (strain ATCC MYA-3404 / T1) (Yeast), this protein is Extent of cell elongation protein 1.